The sequence spans 120 residues: Fumarate reductase subunit D (120 aa).

The next 3 helical transmembrane spans lie at 25-45 (FAML…LGVI), 55-75 (VAGF…ISMP), and 100-120 (IACY…IFMI).

The protein belongs to the FrdD family. Part of an enzyme complex containing four subunits: a flavoprotein (FrdA), an iron-sulfur protein (FrdB), and two hydrophobic anchor proteins (FrdC and FrdD).

It localises to the cell inner membrane. In terms of biological role, anchors the catalytic components of the fumarate reductase complex to the cell membrane, binds quinones. The protein is Fumarate reductase subunit D of Aliivibrio fischeri (strain MJ11) (Vibrio fischeri).